Consider the following 254-residue polypeptide: RNA polymerase sigma factor SigI8 (254 aa).

Residues 61–74 (DEYSIALIAFNEAI) carry the Polymerase core binding motif. The segment at residues 209 to 228 (YKELTERFNLCRRTLEKNRK) is a DNA-binding region (H-T-H motif).

It belongs to the sigma-70 factor family. SigI subfamily. Interacts with RsgI8.

It localises to the cytoplasm. Negatively regulated by the anti-sigma-I factor RsgI8. Functionally, sigma factors are initiation factors that promote the attachment of RNA polymerase to specific initiation sites and are then released. The protein is RNA polymerase sigma factor SigI8 of Acetivibrio thermocellus (strain ATCC 27405 / DSM 1237 / JCM 9322 / NBRC 103400 / NCIMB 10682 / NRRL B-4536 / VPI 7372) (Clostridium thermocellum).